The sequence spans 507 residues: UDP-N-acetylmuramoyl-L-alanyl-D-glutamate--2,6-diaminopimelate ligase (507 aa).

S32 contributes to the UDP-N-acetyl-alpha-D-muramoyl-L-alanyl-D-glutamate binding site. Residue 117–123 (GTNGKTT) coordinates ATP. UDP-N-acetyl-alpha-D-muramoyl-L-alanyl-D-glutamate-binding positions include 159 to 160 (TT), S186, Q192, and R194. Residue K226 is modified to N6-carboxylysine. Residues R400, 424 to 427 (DNPR), G475, and E479 contribute to the meso-2,6-diaminopimelate site. Positions 424–427 (DNPR) match the Meso-diaminopimelate recognition motif motif.

Belongs to the MurCDEF family. MurE subfamily. Mg(2+) serves as cofactor. In terms of processing, carboxylation is probably crucial for Mg(2+) binding and, consequently, for the gamma-phosphate positioning of ATP.

The protein localises to the cytoplasm. The enzyme catalyses UDP-N-acetyl-alpha-D-muramoyl-L-alanyl-D-glutamate + meso-2,6-diaminopimelate + ATP = UDP-N-acetyl-alpha-D-muramoyl-L-alanyl-gamma-D-glutamyl-meso-2,6-diaminopimelate + ADP + phosphate + H(+). The protein operates within cell wall biogenesis; peptidoglycan biosynthesis. Functionally, catalyzes the addition of meso-diaminopimelic acid to the nucleotide precursor UDP-N-acetylmuramoyl-L-alanyl-D-glutamate (UMAG) in the biosynthesis of bacterial cell-wall peptidoglycan. The protein is UDP-N-acetylmuramoyl-L-alanyl-D-glutamate--2,6-diaminopimelate ligase of Prochlorococcus marinus (strain MIT 9313).